Here is a 622-residue protein sequence, read N- to C-terminus: Low affinity potassium transport system protein Kup (622 aa).

Helical transmembrane passes span 9–29 (LPAV…TSPL), 52–72 (FLSL…LLFV), 99–119 (TPVL…EVVI), 137–157 (PSLQ…LFFI), 165–185 (VGKL…VLGV), 213–233 (VSFF…ALYA), 247–267 (WFSA…ALLL), 276–296 (PFFL…ATLA), 337–357 (IYIP…IVSF), 363–383 (LAAA…ILSC), 394–414 (LLIV…MFAA), and 419–439 (IFSG…AMIT).

This sequence belongs to the HAK/KUP transporter (TC 2.A.72) family.

The protein resides in the cell inner membrane. The enzyme catalyses K(+)(in) + H(+)(in) = K(+)(out) + H(+)(out). Its function is as follows. Responsible for the low-affinity transport of potassium into the cell. Likely operates as a K(+):H(+) symporter. The polypeptide is Low affinity potassium transport system protein Kup (Sodalis glossinidius (strain morsitans)).